The chain runs to 382 residues: Gap junction alpha-1 protein (382 aa).

The Cytoplasmic segment spans residues 2-23; sequence GDWSALGKLLDKVQAYSTAGGK. Position 5 is a phosphoserine (S5). The chain crosses the membrane as a helical span at residues 24-44; the sequence is VWLSVLFIFRILLLGTAVESA. Residues 45 to 76 lie on the Extracellular side of the membrane; that stretch reads WGDEQSAFRCNTQQPGCENVCYDKSFPISHVR. Disulfide bonds link C54–C192 and C187–C198. The helical transmembrane segment at 77-97 threads the bilayer; it reads FWVLQIIFVSVPTLLYLAHVF. Residues 98-155 lie on the Cytoplasmic side of the membrane; the sequence is YVMRKEEKLNKKEEELKVAQTDGANVDMHLKQIEIKKFKYGIEEHGKVKMRGGLLRTY. K144 participates in a covalent cross-link: Glycyl lysine isopeptide (Lys-Gly) (interchain with G-Cter in SUMO). Residues 156 to 176 form a helical membrane-spanning segment; it reads IISILFKSVFEVAFLLIQWYI. Residues 177 to 207 lie on the Extracellular side of the membrane; sequence YGFSLSAVYTCKRDPCPHQVDCFLSRPTEKT. A helical membrane pass occupies residues 208–228; that stretch reads IFIIFMLVVSLVSLALNIIEL. Residues 229–382 lie on the Cytoplasmic side of the membrane; sequence FYVFFKGIKD…SRPRPDDLEI (154 aa). Residue K237 forms a Glycyl lysine isopeptide (Lys-Gly) (interchain with G-Cter in SUMO) linkage. The interval 244 to 382 is interaction with NOV; sequence SDLYHATTGP…SRPRPDDLEI (139 aa). Phosphotyrosine is present on Y247. Phosphoserine is present on residues S255, S257, and S262. The interval 264 to 382 is interaction with UBQLN4; sequence TYAYFNGCSS…SRPRPDDLEI (119 aa). The residue at position 271 (C271) is an S-nitrosocysteine. Position 275 is a phosphothreonine (T275). S306 and S314 each carry phosphoserine. The span at 317-332 shows a compositional bias: polar residues; sequence QNRMGQAGSTISNSHA. The tract at residues 317–382 is disordered; that stretch reads QNRMGQAGST…SRPRPDDLEI (66 aa). S325 is modified (phosphoserine; by CK1). T326 is modified (phosphothreonine). Residues S328 and S330 each carry the phosphoserine; by CK1 modification. Phosphoserine is present on residues S344 and S365. Residues 362–374 show a composition bias toward low complexity; the sequence is RPSSRASSRASSR. S368 bears the Phosphoserine; by PKC/PRKCG and PKC/PRKCD mark. Phosphoserine is present on residues S369 and S373.

It belongs to the connexin family. Alpha-type (group II) subfamily. As to quaternary structure, a connexon is composed of a hexamer of connexins. Interacts with SGSM3. Interacts with RIC1/CIP150. Interacts with CNST and CSNK1D. Interacts (via C-terminus) with TJP1. Interacts (via C-terminus) with SRC (via SH3 domain). Interacts (not ubiquitinated) with UBQLN4 (via UBA domain). Interacts with NOV. Interacts with TMEM65. Interacts with ANK3/ANKG and PKP2. In terms of processing, phosphorylation at Ser-325, Ser-328 and Ser-330 by CK1 modulates gap junction assembly. Phosphorylated at Ser-368 by PRKCG; phosphorylation induces disassembly of gap junction plaques and inhibition of gap junction activity. Phosphorylation at Ser-368 by PRKCD triggers its internalization into small vesicles leading to proteasome-mediated degradation. Sumoylated with SUMO1, SUMO2 and SUMO3, which may regulate the level of functional Cx43 gap junctions at the plasma membrane. May be desumoylated by SENP1 or SENP2. Post-translationally, S-nitrosylation at Cys-271 is enriched at the muscle endothelial gap junction in arteries, it augments channel permeability and may regulate of smooth muscle cell to endothelial cell communication. In terms of processing, acetylated in the developing cortex; leading to delocalization from the cell membrane.

It localises to the cell membrane. It is found in the cell junction. The protein localises to the gap junction. The protein resides in the endoplasmic reticulum. Functionally, gap junction protein that acts as a regulator of bladder capacity. A gap junction consists of a cluster of closely packed pairs of transmembrane channels, the connexons, through which materials of low MW diffuse from one cell to a neighboring cell. May play a critical role in the physiology of hearing by participating in the recycling of potassium to the cochlear endolymph. Negative regulator of bladder functional capacity: acts by enhancing intercellular electrical and chemical transmission, thus sensitizing bladder muscles to cholinergic neural stimuli and causing them to contract. May play a role in cell growth inhibition through the regulation of NOV expression and localization. Plays an essential role in gap junction communication in the ventricles. In Erinaceus europaeus (Western European hedgehog), this protein is Gap junction alpha-1 protein (GJA1).